Here is a 581-residue protein sequence, read N- to C-terminus: Interleukin-22 receptor subunit alpha-1 (581 aa).

Residues 1–15 form the signal peptide; it reads MRTLLTILAAGSLLA. At 16-228 the chain is on the extracellular side; that stretch reads HITEDTSDLL…VKTLPDRTWT (213 aa). 2 Fibronectin type-III domains span residues 18–115 and 141–221; these read TEDT…RFSS and PTYT…RVKT. The cysteines at positions 71 and 79 are disulfide-linked. Residue asparagine 80 is glycosylated (N-linked (GlcNAc...) asparagine). Cysteine 128 and cysteine 217 are disulfide-bonded. A helical transmembrane segment spans residues 229–249; the sequence is YSFSGAFLFSLGFLVAGLCYL. Residues 250–581 lie on the Cytoplasmic side of the membrane; that stretch reads SYRYITKPPP…GLALTVQWES (332 aa). Disordered regions lie at residues 354–493 and 539–563; these read QAAP…SSLK and PSDE…LESP. Positions 378–389 are enriched in polar residues; the sequence is TPQAVSETQLPS. Residues serine 410 and serine 414 each carry the phosphoserine modification. A compositionally biased stretch (polar residues) spans 440-449; sequence CSPTGLSLQE.

This sequence belongs to the type II cytokine receptor family. As to quaternary structure, heterodimer with IL10RB and with IL20RB. Interacts with FBXW12; the interaction promotes ubiquitination of IL22RA1. Ubiquitinated.

Its subcellular location is the cell membrane. In terms of biological role, component of the receptor for IL20, IL22 and IL24. Component of IL22 receptor formed by IL22RA1 and IL10RB enabling IL22 signaling via JAK/STAT pathways. IL22 also induces activation of MAPK1/MAPK3 and Akt kinases pathways. Component of one of the receptor for IL20 and IL24 formed by IL22RA1 and IL20RB also signaling through STATs activation. Mediates IL24 antiangiogenic activity as well as IL24 inhibitory effect on endothelial cell tube formation and differentiation. This chain is Interleukin-22 receptor subunit alpha-1 (IL22RA1), found in Bos taurus (Bovine).